Consider the following 88-residue polypeptide: Putative regulatory protein Npun_R3866 (88 aa).

This sequence belongs to the RemA family.

In Nostoc punctiforme (strain ATCC 29133 / PCC 73102), this protein is Putative regulatory protein Npun_R3866.